A 256-amino-acid polypeptide reads, in one-letter code: MSTHLSVNVNKIAVLRNSRGGQDPDVVQAARSCIAAGAHGITVHPRPDQRHIRADDVYALSTLTRMHGVEFNIEGNPFAPPRAGYPGLLELCRATRPQQVTLVPDGDGQLTSDHGVDFARDGARLAPLIAAFKTLGCRVSLFVDAGNPEIAQAAALGADRIELYTGPYAEAHHHGQSQPSLALFADAARRAHAAGLGINAGHDLSQHNLADFLAGVPDVLEVSIGHALVGEALYQGLEPTVRAYLAIIAGGATTAA.

Residues Asn8 and Arg19 each coordinate 3-amino-2-oxopropyl phosphate. His44 acts as the Proton acceptor in catalysis. Arg46 and His51 together coordinate 1-deoxy-D-xylulose 5-phosphate. Glu74 serves as the catalytic Proton acceptor. Residue Thr111 participates in 1-deoxy-D-xylulose 5-phosphate binding. The active-site Proton donor is the His202. Residues Asp203 and 225 to 226 each bind 3-amino-2-oxopropyl phosphate; that span reads GH.

Belongs to the PNP synthase family. In terms of assembly, homooctamer; tetramer of dimers.

It is found in the cytoplasm. The catalysed reaction is 3-amino-2-oxopropyl phosphate + 1-deoxy-D-xylulose 5-phosphate = pyridoxine 5'-phosphate + phosphate + 2 H2O + H(+). The protein operates within cofactor biosynthesis; pyridoxine 5'-phosphate biosynthesis; pyridoxine 5'-phosphate from D-erythrose 4-phosphate: step 5/5. Catalyzes the complicated ring closure reaction between the two acyclic compounds 1-deoxy-D-xylulose-5-phosphate (DXP) and 3-amino-2-oxopropyl phosphate (1-amino-acetone-3-phosphate or AAP) to form pyridoxine 5'-phosphate (PNP) and inorganic phosphate. The protein is Pyridoxine 5'-phosphate synthase of Xanthomonas campestris pv. campestris (strain 8004).